The sequence spans 64 residues: MRLHRLLLVFLLMVLLPVPGLLKNIGNSVSCLRNKGVCMPGKCAPKMKQIGTCGMPQVKCCKRK.

An N-terminal signal peptide occupies residues 1 to 20 (MRLHRLLLVFLLMVLLPVPG). Residues 21–23 (LLK) constitute a propeptide that is removed on maturation. Cystine bridges form between Cys-31–Cys-60, Cys-38–Cys-53, and Cys-43–Cys-61.

This sequence belongs to the beta-defensin family. Monomer. Homodimer.

The protein resides in the secreted. Its subcellular location is the membrane. Has bactericidal activity. May act as a ligand for C-C chemokine receptor CCR6. Positively regulates the sperm motility and bactericidal activity in a CCR6-dependent manner. Binds to CCR6 and triggers Ca2+ mobilization in the sperm which is important for its motility. The polypeptide is Beta-defensin 1 (DEFB1) (Sus scrofa (Pig)).